A 1035-amino-acid polypeptide reads, in one-letter code: Isoleucine--tRNA ligase (1035 aa).

A 'HIGH' region motif is present at residues 48-58 (PTANGRPHVGH). Residues 589-593 (KMSKH) carry the 'KMSKS' region motif. Residue K592 participates in ATP binding.

It belongs to the class-I aminoacyl-tRNA synthetase family. IleS type 2 subfamily. As to quaternary structure, monomer. Zn(2+) is required as a cofactor.

Its subcellular location is the cytoplasm. It carries out the reaction tRNA(Ile) + L-isoleucine + ATP = L-isoleucyl-tRNA(Ile) + AMP + diphosphate. Catalyzes the attachment of isoleucine to tRNA(Ile). As IleRS can inadvertently accommodate and process structurally similar amino acids such as valine, to avoid such errors it has two additional distinct tRNA(Ile)-dependent editing activities. One activity is designated as 'pretransfer' editing and involves the hydrolysis of activated Val-AMP. The other activity is designated 'posttransfer' editing and involves deacylation of mischarged Val-tRNA(Ile). The polypeptide is Isoleucine--tRNA ligase (Clostridium acetobutylicum (strain ATCC 824 / DSM 792 / JCM 1419 / IAM 19013 / LMG 5710 / NBRC 13948 / NRRL B-527 / VKM B-1787 / 2291 / W)).